Consider the following 372-residue polypeptide: L-selectin (372 aa).

A signal peptide spans 1 to 28; the sequence is MIFPWKCQSTQRDLWNIFKLWGWTMLCC. Residues 29 to 38 constitute a propeptide that is removed on maturation; it reads DFLAHHGTDC. Residues 39-332 are Extracellular-facing; sequence WTYHYSEKPM…FSMIKEGDYN (294 aa). In terms of domain architecture, C-type lectin spans 55 to 155; that stretch reads RFCRDNYTDL…ACHKLKAALC (101 aa). Intrachain disulfides connect C57–C155, C128–C147, C128–C160, C160–C171, C165–C180, C182–C191, C197–C241, C227–C254, C259–C303, and C289–C316. 2 N-linked (GlcNAc...) asparagine glycosylation sites follow: N60 and N104. Positions 118, 120, 126, 143, and 144 each coordinate Ca(2+). An EGF-like domain is found at 156-192; sequence YTASCQPWSCSGHGECVEIINNYTCNCDVGYYGPQCQ. The N-linked (GlcNAc...) asparagine glycan is linked to N177. 2 Sushi domains span residues 195–256 and 257–318; these read IQCE…TCQV and IQCE…ICQK. N216, N232, N246, and N271 each carry an N-linked (GlcNAc...) asparagine glycan. The helical transmembrane segment at 333–355 threads the bilayer; sequence PLFIPVAVMVTAFSGLAFIIWLA. Topologically, residues 356–372 are cytoplasmic; that stretch reads RRLKKGKKSKRSMDDPY.

Belongs to the selectin/LECAM family. In terms of assembly, interaction with SELPLG/PSGL1 and PODXL2 is required for promoting recruitment and rolling of leukocytes. This interaction is dependent on the sialyl Lewis X glycan modification of SELPLG and PODXL2, and tyrosine sulfation modifications of SELPLG. Sulfation on 'Tyr-51' of SELPLG is important for L-selectin binding. N-glycosylated.

It localises to the cell membrane. Calcium-dependent lectin that mediates cell adhesion by binding to glycoproteins on neighboring cells. Mediates the adherence of lymphocytes to endothelial cells of high endothelial venules in peripheral lymph nodes. Promotes initial tethering and rolling of leukocytes in endothelia. This is L-selectin (SELL) from Pan troglodytes (Chimpanzee).